The primary structure comprises 339 residues: Ribosomal RNA large subunit methyltransferase M (339 aa).

S-adenosyl-L-methionine-binding positions include Ser176, 206–209 (APGG), Asp225, Asp245, and Asp261. The active-site Proton acceptor is the Lys290.

The protein belongs to the class I-like SAM-binding methyltransferase superfamily. RNA methyltransferase RlmE family. RlmM subfamily. In terms of assembly, monomer.

Its subcellular location is the cytoplasm. The enzyme catalyses cytidine(2498) in 23S rRNA + S-adenosyl-L-methionine = 2'-O-methylcytidine(2498) in 23S rRNA + S-adenosyl-L-homocysteine + H(+). Its function is as follows. Catalyzes the 2'-O-methylation at nucleotide C2498 in 23S rRNA. In Halorhodospira halophila (strain DSM 244 / SL1) (Ectothiorhodospira halophila (strain DSM 244 / SL1)), this protein is Ribosomal RNA large subunit methyltransferase M.